Consider the following 328-residue polypeptide: Alanine racemase (328 aa).

Residue lysine 33 is the Proton acceptor; specific for D-alanine of the active site. Lysine 33 carries the N6-(pyridoxal phosphate)lysine modification. Arginine 118 is a substrate binding site. Tyrosine 237 acts as the Proton acceptor; specific for L-alanine in catalysis. Position 283 (methionine 283) interacts with substrate.

Belongs to the alanine racemase family. The cofactor is pyridoxal 5'-phosphate.

It carries out the reaction L-alanine = D-alanine. It participates in amino-acid biosynthesis; D-alanine biosynthesis; D-alanine from L-alanine: step 1/1. Its function is as follows. Catalyzes the interconversion of L-alanine and D-alanine. May also act on other amino acids. This is Alanine racemase (alr) from Campylobacter jejuni subsp. jejuni serotype O:2 (strain ATCC 700819 / NCTC 11168).